A 194-amino-acid chain; its full sequence is FMN-dependent NADH:quinone oxidoreductase (194 aa).

FMN is bound by residues Ser-10, 16–18, 91–94, and 135–138; these read SQS, MYNF, and TRGG.

This sequence belongs to the azoreductase type 1 family. As to quaternary structure, homodimer. FMN serves as cofactor.

It carries out the reaction 2 a quinone + NADH + H(+) = 2 a 1,4-benzosemiquinone + NAD(+). The catalysed reaction is N,N-dimethyl-1,4-phenylenediamine + anthranilate + 2 NAD(+) = 2-(4-dimethylaminophenyl)diazenylbenzoate + 2 NADH + 2 H(+). Quinone reductase that provides resistance to thiol-specific stress caused by electrophilic quinones. Its function is as follows. Also exhibits azoreductase activity. Catalyzes the reductive cleavage of the azo bond in aromatic azo compounds to the corresponding amines. The sequence is that of FMN-dependent NADH:quinone oxidoreductase from Vibrio parahaemolyticus serotype O3:K6 (strain RIMD 2210633).